Reading from the N-terminus, the 49-residue chain is MVEAIYRCAKCGREVKIDLSVTRDLRCPYCGSKILYKPRPKVPRRVKAI.

Residues C11, C27, and C30 each contribute to the Zn(2+) site.

Belongs to the archaeal Rpo12/eukaryotic RPC10 RNA polymerase subunit family. In terms of assembly, part of the RNA polymerase complex. Requires Zn(2+) as cofactor.

Its subcellular location is the cytoplasm. It carries out the reaction RNA(n) + a ribonucleoside 5'-triphosphate = RNA(n+1) + diphosphate. Functionally, DNA-dependent RNA polymerase (RNAP) catalyzes the transcription of DNA into RNA using the four ribonucleoside triphosphates as substrates. The chain is DNA-directed RNA polymerase subunit Rpo12 from Pyrococcus abyssi (strain GE5 / Orsay).